The chain runs to 276 residues: Dermonecrotic toxin LarSicTox-alphaIB2c (276 aa).

The active site involves His5. Mg(2+) contacts are provided by Glu25 and Asp27. His41 serves as the catalytic Nucleophile. Disulfide bonds link Cys45–Cys51 and Cys47–Cys190. Asp85 serves as a coordination point for Mg(2+). Asn253 carries an N-linked (GlcNAc...) asparagine glycan.

It belongs to the arthropod phospholipase D family. Class II subfamily. Mg(2+) serves as cofactor. In terms of tissue distribution, expressed by the venom gland.

The protein localises to the secreted. The catalysed reaction is an N-(acyl)-sphingosylphosphocholine = an N-(acyl)-sphingosyl-1,3-cyclic phosphate + choline. It carries out the reaction an N-(acyl)-sphingosylphosphoethanolamine = an N-(acyl)-sphingosyl-1,3-cyclic phosphate + ethanolamine. The enzyme catalyses a 1-acyl-sn-glycero-3-phosphocholine = a 1-acyl-sn-glycero-2,3-cyclic phosphate + choline. It catalyses the reaction a 1-acyl-sn-glycero-3-phosphoethanolamine = a 1-acyl-sn-glycero-2,3-cyclic phosphate + ethanolamine. Dermonecrotic toxins cleave the phosphodiester linkage between the phosphate and headgroup of certain phospholipids (sphingolipid and lysolipid substrates), forming an alcohol (often choline) and a cyclic phosphate. This toxin acts on sphingomyelin (SM). It may also act on ceramide phosphoethanolamine (CPE), lysophosphatidylcholine (LPC) and lysophosphatidylethanolamine (LPE), but not on lysophosphatidylserine (LPS), and lysophosphatidylglycerol (LPG). It acts by transphosphatidylation, releasing exclusively cyclic phosphate products as second products. Induces dermonecrosis, hemolysis, increased vascular permeability, edema, inflammatory response, and platelet aggregation. In Loxosceles arizonica (Arizona brown spider), this protein is Dermonecrotic toxin LarSicTox-alphaIB2c.